The following is a 193-amino-acid chain: Cysteine and glycine-rich protein 1 (193 aa).

In terms of domain architecture, LIM zinc-binding 1 spans 10 to 61 (CGVCQKTVYFAEEVQCEGNSFHKSCFLCMVCKKNLDSTTVAVHGEEIYCKSC). Positions 64–69 (KKYGPK) match the Nuclear localization signal motif. Ser-81 is modified (phosphoserine). An N6-acetyllysine modification is found at Lys-84. Residue Lys-91 forms a Glycyl lysine isopeptide (Lys-Gly) (interchain with G-Cter in SUMO2) linkage. N6-acetyllysine occurs at positions 112, 131, 137, and 161. The 52-residue stretch at 119–170 (CPRCSQAVYAAEKVIGAGKSWHKACFRCAKCGKGLESTTLADKDGEIYCKGC) folds into the LIM zinc-binding 2 domain. Ser-192 carries the post-translational modification Phosphoserine.

Interacts with ASCC1; ASCC2 and TRIP4.

It localises to the nucleus. Its function is as follows. Could play a role in neuronal development. In Homo sapiens (Human), this protein is Cysteine and glycine-rich protein 1 (CSRP1).